We begin with the raw amino-acid sequence, 73 residues long: Putative sodium channel toxin Ts39 (73 aa).

An N-terminal signal peptide occupies residues 1–22 (MKTLNFCLFLVIISSLTVRVFC). The LCN-type CS-alpha/beta domain occupies 24–73 (NDRFLTVNDNYVICLYINKSFVNCENLCKAYMNAKDGFCRQPHCFCTDVE). 3 disulfide bridges follow: C37/C62, C47/C67, and C51/C69.

The protein belongs to the long (3 C-C) scorpion toxin superfamily. Sodium channel inhibitor family. As to expression, expressed by the venom gland.

It is found in the secreted. In terms of biological role, putative sodium channel toxin. This Tityus serrulatus (Brazilian scorpion) protein is Putative sodium channel toxin Ts39.